The primary structure comprises 422 residues: Retinoic acid receptor RXR-beta-B (422 aa).

The segment at 1–89 is modulating; the sequence is MNSLPPSTSA…SGPMLSQKRM (89 aa). NR C4-type zinc fingers lie at residues 90-110 and 126-150; these read CAICGDRSSGKHYGVYSCEGC and CRDNKECLVDKRQRNRCQYCRYQKC. The nuclear receptor DNA-binding region spans 90–155; that stretch reads CAICGDRSSG…RYQKCLAMGM (66 aa). The hinge stretch occupies residues 156–178; it reads KREAVQEERQKNKERDGDYECSS. Over residues 161–173 the composition is skewed to basic and acidic residues; sequence QEERQKNKERDGD. The tract at residues 161–182 is disordered; it reads QEERQKNKERDGDYECSSSANE. One can recognise an NR LBD domain in the interval 181 to 421; the sequence is NEEMPVEKIL…TFLMEMLESP (241 aa).

Belongs to the nuclear hormone receptor family. NR2 subfamily. Homodimer. Heterodimer; with a rar molecule. Binds DNA preferentially as a rar/rxr heterodimer. Heterodimerizes with rarga. As to expression, shows uniform expression from the blastula to mid-gastrula stages. At 12 hours post-fertilization (hpf), expressed ubiquitously but more weakly. At 24 hpf, restricted to the ventral diencephalon, pharangeal endoderm and trunk and tail mesoderm; mesoderm expression is in medial cells of each somite along the dorsoventral axis, forming stripes. At 48 hpf, expressed in forebrain, eye, midbrain and anterior hindbrain.

The protein resides in the nucleus. Its function is as follows. Receptor for retinoic acid. Retinoic acid receptors bind as heterodimers to their target response elements in response to their ligands, all-trans or 9-cis retinoic acid, and regulate gene expression in various biological processes. The rar/rxr heterodimers bind to the retinoic acid response elements (RARE) composed of tandem 5'-AGGTCA-3' sites known as DR1-DR5. The high affinity ligand for rxrs is 9-cis retinoic acid. The sequence is that of Retinoic acid receptor RXR-beta-B (rxrbb) from Danio rerio (Zebrafish).